Here is a 456-residue protein sequence, read N- to C-terminus: Tyrosinase-like protein 2 (456 aa).

A signal peptide spans 1-22 (MNTMALFGKVILLQFLIGVGFC). Positions 145, 154, 163, 295, 299, and 322 each coordinate Cu cation.

Cu(2+) is required as a cofactor. As to expression, prismatic layer of shell (at protein level).

It localises to the secreted. This Margaritifera margaritifera (Freshwater pearl mussel) protein is Tyrosinase-like protein 2.